A 101-amino-acid polypeptide reads, in one-letter code: Small ribosomal subunit protein uS10 (101 aa).

Belongs to the universal ribosomal protein uS10 family. Part of the 30S ribosomal subunit.

Functionally, involved in the binding of tRNA to the ribosomes. The sequence is that of Small ribosomal subunit protein uS10 from Methanocaldococcus jannaschii (strain ATCC 43067 / DSM 2661 / JAL-1 / JCM 10045 / NBRC 100440) (Methanococcus jannaschii).